A 284-amino-acid chain; its full sequence is Avenin-like b4 (284 aa).

The signal sequence occupies residues 1–18 (MKVFILALLALTATTAIA).

The protein belongs to the prolamin family. Contains disulfide bonds.

Seed storage protein. Might be integrated via inter-chain disulfide bonds within the glutenin polymer. The polypeptide is Avenin-like b4 (Triticum aestivum (Wheat)).